Reading from the N-terminus, the 504-residue chain is Cytochrome P450 2D1 (504 aa).

Position 446 (cysteine 446) interacts with heme.

The protein belongs to the cytochrome P450 family. Heme serves as cofactor.

Its subcellular location is the endoplasmic reticulum membrane. The protein localises to the microsome membrane. It carries out the reaction an organic molecule + reduced [NADPH--hemoprotein reductase] + O2 = an alcohol + oxidized [NADPH--hemoprotein reductase] + H2O + H(+). In terms of biological role, cytochromes P450 are a group of heme-thiolate monooxygenases. In liver microsomes, this enzyme is involved in an NADPH-dependent electron transport pathway. It oxidizes a variety of structurally unrelated compounds, including steroids, fatty acids, and xenobiotics. This is Cytochrome P450 2D1 (Cyp2d1) from Rattus norvegicus (Rat).